The sequence spans 523 residues: 2-isopropylmalate synthase (523 aa).

The Pyruvate carboxyltransferase domain occupies 5–267 (VIIFDTTLRD…HTAINHQEIW (263 aa)). 4 residues coordinate Mn(2+): Asp14, His202, His204, and Asn238. The regulatory domain stretch occupies residues 392–523 (RLDYFSVQSG…QHNENNKETV (132 aa)).

The protein belongs to the alpha-IPM synthase/homocitrate synthase family. LeuA type 1 subfamily. In terms of assembly, homodimer. The cofactor is Mn(2+).

Its subcellular location is the cytoplasm. The enzyme catalyses 3-methyl-2-oxobutanoate + acetyl-CoA + H2O = (2S)-2-isopropylmalate + CoA + H(+). The protein operates within amino-acid biosynthesis; L-leucine biosynthesis; L-leucine from 3-methyl-2-oxobutanoate: step 1/4. In terms of biological role, catalyzes the condensation of the acetyl group of acetyl-CoA with 3-methyl-2-oxobutanoate (2-ketoisovalerate) to form 3-carboxy-3-hydroxy-4-methylpentanoate (2-isopropylmalate). The sequence is that of 2-isopropylmalate synthase from Escherichia coli O45:K1 (strain S88 / ExPEC).